Consider the following 105-residue polypeptide: Transmembrane protein 273 (105 aa).

The N-terminal stretch at 1–19 (MNLGVSMLRILFLLDVGGA) is a signal peptide. The Extracellular segment spans residues 20-38 (QVLATGKTPGAEIDFKYAL). Residues 39-59 (IGTAVGVAISAGFLALKICMI) form a helical membrane-spanning segment. Residues 60–105 (RRHLFDDDSSDLKSTPGGLSDTIPLKKRAPRRNHNFSKRDAQVIEL) are Cytoplasmic-facing.

It is found in the membrane. In Homo sapiens (Human), this protein is Transmembrane protein 273.